A 601-amino-acid chain; its full sequence is A-type ATP synthase subunit A (601 aa).

236–243 (GPFGSGKT) lines the ATP pocket.

This sequence belongs to the ATPase alpha/beta chains family. In terms of assembly, has multiple subunits with at least A(3), B(3), C, D, E, F, H, I and proteolipid K(x).

Its subcellular location is the cell membrane. It catalyses the reaction ATP + H2O + 4 H(+)(in) = ADP + phosphate + 5 H(+)(out). Component of the A-type ATP synthase that produces ATP from ADP in the presence of a proton gradient across the membrane. The A chain is the catalytic subunit. This is A-type ATP synthase subunit A from Hyperthermus butylicus (strain DSM 5456 / JCM 9403 / PLM1-5).